The sequence spans 539 residues: Acid-sensing ion channel 4 (539 aa).

Topologically, residues 1–68 (MPIEIVCKIK…GPGPHGLRRT (68 aa)) are cytoplasmic. The helical transmembrane segment at 69–89 (LWALALLTSLAAFLYQAAGLA) threads the bilayer. The Extracellular portion of the chain corresponds to 90-438 (RGYLTRPHLV…EQRAAYGLSA (349 aa)). Intrachain disulfides connect Cys118/Cys202 and Cys180/Cys187. Asn191 and Asn243 each carry an N-linked (GlcNAc...) asparagine glycan. 5 cysteine pairs are disulfide-bonded: Cys296–Cys375, Cys318–Cys371, Cys322–Cys369, Cys331–Cys353, and Cys333–Cys345. The N-linked (GlcNAc...) asparagine glycan is linked to Asn376. The chain crosses the membrane as a helical span at residues 439–459 (LLGDLGGQMGLFIGASILTLL). Residues 452–454 (GAS) carry the GAS motif; ion selectivity filter motif. At 460–539 (EILDYIYEVS…PGGLFEDFAC (80 aa)) the chain is on the cytoplasmic side. Residues 501 to 531 (EQSPCPSRGRVEGGGVSSLLPNHHHPHGPPG) form a disordered region.

Belongs to the amiloride-sensitive sodium channel (TC 1.A.6) family. ASIC4 subfamily. In terms of assembly, homotrimer. Heterotrimer; with other ASIC proteins producing functional channels. In terms of tissue distribution, expressed in pituitary gland. Weakly expressed in brain, vestibular system and organ of Corti.

The protein resides in the cell membrane. Functionally, does not exhibit measurable stand-alone pH-gated sodium channel activity but may form pH-gated heterotrimeric sodium channels. Its activity could also depend on alternative gating mechanisms. The protein is Acid-sensing ion channel 4 of Homo sapiens (Human).